The sequence spans 664 residues: Macoilin (664 aa).

Helical transmembrane passes span T28–L48, A75–I95, V120–F140, and F154–V174. Positions R253 to K265 are enriched in basic and acidic residues. Residues R253–N274 form a disordered region. S305 is modified (phosphoserine). Residues K320–S348 show a composition bias toward polar residues. A disordered region spans residues K320 to N375. A glycan (N-linked (GlcNAc...) asparagine) is linked at N324. S332 is modified (phosphoserine). N340 and N452 each carry an N-linked (GlcNAc...) asparagine glycan. The tract at residues T630 to K664 is disordered. Phosphoserine is present on residues S631 and S634. N-linked (GlcNAc...) asparagine glycosylation occurs at N655.

Belongs to the macoilin family.

The protein localises to the rough endoplasmic reticulum membrane. It is found in the nucleus membrane. In terms of biological role, plays a role in the regulation of neuronal activity. This is Macoilin (MACO1) from Macaca mulatta (Rhesus macaque).